The sequence spans 417 residues: 4-hydroxy-3-methylbut-2-enyl diphosphate reductase (417 aa).

Cysteine 56 is a binding site for [4Fe-4S] cluster. Residue histidine 86 coordinates (2E)-4-hydroxy-3-methylbut-2-enyl diphosphate. Histidine 86 serves as a coordination point for dimethylallyl diphosphate. Histidine 86 contacts isopentenyl diphosphate. Cysteine 151 serves as a coordination point for [4Fe-4S] cluster. Histidine 179 contributes to the (2E)-4-hydroxy-3-methylbut-2-enyl diphosphate binding site. Histidine 179 provides a ligand contact to dimethylallyl diphosphate. Position 179 (histidine 179) interacts with isopentenyl diphosphate. Glutamate 181 functions as the Proton donor in the catalytic mechanism. Residue threonine 244 participates in (2E)-4-hydroxy-3-methylbut-2-enyl diphosphate binding. Position 282 (cysteine 282) interacts with [4Fe-4S] cluster. Positions 311, 312, 313, and 374 each coordinate (2E)-4-hydroxy-3-methylbut-2-enyl diphosphate. The dimethylallyl diphosphate site is built by serine 311, serine 312, asparagine 313, and serine 374. Positions 311, 312, 313, and 374 each coordinate isopentenyl diphosphate.

The protein belongs to the IspH family. The cofactor is [4Fe-4S] cluster.

The enzyme catalyses isopentenyl diphosphate + 2 oxidized [2Fe-2S]-[ferredoxin] + H2O = (2E)-4-hydroxy-3-methylbut-2-enyl diphosphate + 2 reduced [2Fe-2S]-[ferredoxin] + 2 H(+). The catalysed reaction is dimethylallyl diphosphate + 2 oxidized [2Fe-2S]-[ferredoxin] + H2O = (2E)-4-hydroxy-3-methylbut-2-enyl diphosphate + 2 reduced [2Fe-2S]-[ferredoxin] + 2 H(+). It functions in the pathway isoprenoid biosynthesis; dimethylallyl diphosphate biosynthesis; dimethylallyl diphosphate from (2E)-4-hydroxy-3-methylbutenyl diphosphate: step 1/1. Its pathway is isoprenoid biosynthesis; isopentenyl diphosphate biosynthesis via DXP pathway; isopentenyl diphosphate from 1-deoxy-D-xylulose 5-phosphate: step 6/6. In terms of biological role, catalyzes the conversion of 1-hydroxy-2-methyl-2-(E)-butenyl 4-diphosphate (HMBPP) into a mixture of isopentenyl diphosphate (IPP) and dimethylallyl diphosphate (DMAPP). Acts in the terminal step of the DOXP/MEP pathway for isoprenoid precursor biosynthesis. The chain is 4-hydroxy-3-methylbut-2-enyl diphosphate reductase from Gloeobacter violaceus (strain ATCC 29082 / PCC 7421).